Consider the following 210-residue polypeptide: Guanylate kinase (210 aa).

The Guanylate kinase-like domain occupies Gly-6 to Arg-186. Ser-13–Thr-20 is an ATP binding site.

It belongs to the guanylate kinase family.

The protein localises to the cytoplasm. It catalyses the reaction GMP + ATP = GDP + ADP. Essential for recycling GMP and indirectly, cGMP. The protein is Guanylate kinase of Anaplasma phagocytophilum (strain HZ).